The following is a 329-amino-acid chain: Biotin synthase (329 aa).

The Radical SAM core domain maps to 38-262; the sequence is NTIQVSTLLS…IMPHSYIRLS (225 aa). Residues Cys53, Cys57, and Cys60 each contribute to the [4Fe-4S] cluster site. The [2Fe-2S] cluster site is built by Cys97, Cys128, Cys188, and Arg260.

It belongs to the radical SAM superfamily. Biotin synthase family. Homodimer. [4Fe-4S] cluster serves as cofactor. It depends on [2Fe-2S] cluster as a cofactor.

The enzyme catalyses (4R,5S)-dethiobiotin + (sulfur carrier)-SH + 2 reduced [2Fe-2S]-[ferredoxin] + 2 S-adenosyl-L-methionine = (sulfur carrier)-H + biotin + 2 5'-deoxyadenosine + 2 L-methionine + 2 oxidized [2Fe-2S]-[ferredoxin]. Its pathway is cofactor biosynthesis; biotin biosynthesis; biotin from 7,8-diaminononanoate: step 2/2. Functionally, catalyzes the conversion of dethiobiotin (DTB) to biotin by the insertion of a sulfur atom into dethiobiotin via a radical-based mechanism. The polypeptide is Biotin synthase (Acinetobacter baumannii (strain ACICU)).